A 303-amino-acid chain; its full sequence is MSPQELKNVLQSGLLSFPLTDFDRELNFAPKPYAERLKWLQPYGASALFAAGGTGEFFSLEPGEYSDVIKVALDTCRGRTPIIAGAGGGTRVAIQYAQEAERLGAQGVLLLPHYLTEASQEGLIAHVQAVCRSVRFGVTVYNRGACKLTPASLLVLAETCPNLIGFKDGIGDIETFVSIRQTLGERFAYLGGLPTAEVFAGAYKAMGCPVYSSAVFNFIPKTAMEFYNAHAAGDSATCDRLIRDFFLPYIALRNKNHGYAVSIVKAGATLIGHGAGPVRPPLSDLKPAEVAELAALMAKLGPQ.

The protein belongs to the DapA family.

The enzyme catalyses 5-dehydro-4-deoxy-D-glucarate + H(+) = 2,5-dioxopentanoate + CO2 + H2O. It functions in the pathway carbohydrate acid metabolism; D-glucarate degradation; 2,5-dioxopentanoate from D-glucarate: step 2/2. The polypeptide is Probable 5-dehydro-4-deoxyglucarate dehydratase (Leptothrix cholodnii (strain ATCC 51168 / LMG 8142 / SP-6) (Leptothrix discophora (strain SP-6))).